Reading from the N-terminus, the 354-residue chain is Methionine import ATP-binding protein MetN (354 aa).

One can recognise an ABC transporter domain in the interval 8 to 250 (LDHIDITFRQ…PKEALTQKFI (243 aa)). Residue 42-49 (GYSGAGKS) participates in ATP binding.

This sequence belongs to the ABC transporter superfamily. Methionine importer (TC 3.A.1.24) family. The complex is composed of two ATP-binding proteins (MetN), two transmembrane proteins (MetI) and a solute-binding protein (MetQ).

The protein localises to the cell membrane. The catalysed reaction is L-methionine(out) + ATP + H2O = L-methionine(in) + ADP + phosphate + H(+). The enzyme catalyses D-methionine(out) + ATP + H2O = D-methionine(in) + ADP + phosphate + H(+). Its function is as follows. Part of the ABC transporter complex MetNIQ involved in methionine import. Responsible for energy coupling to the transport system. The polypeptide is Methionine import ATP-binding protein MetN (Streptococcus pyogenes serotype M6 (strain ATCC BAA-946 / MGAS10394)).